The following is a 532-amino-acid chain: Flavin-containing monooxygenase 3 (532 aa).

Residues glycine 9–serine 13, glutamate 32, leucine 40–tryptophan 41, and asparagine 61–serine 62 each bind FAD. Residues serine 60–asparagine 61 and serine 195–aspartate 198 each bind NADP(+). The residue at position 401 (serine 401) is a Phosphoserine. Residues phenylalanine 510 to valine 530 traverse the membrane as a helical segment.

It belongs to the FMO family. FAD serves as cofactor. In terms of tissue distribution, liver.

The protein localises to the microsome membrane. Its subcellular location is the endoplasmic reticulum membrane. It carries out the reaction trimethylamine + NADPH + O2 = trimethylamine N-oxide + NADP(+) + H2O. The enzyme catalyses N,N-dimethylaniline + NADPH + O2 + H(+) = N,N-dimethylaniline N-oxide + NADP(+) + H2O. The catalysed reaction is hypotaurine + NADPH + O2 + H(+) = taurine + NADP(+) + H2O. It catalyses the reaction (S)-nicotine + NADPH + O2 = trans-(S)-nicotine N(1')-oxide + NADP(+) + H2O. It carries out the reaction albendazole + NADPH + O2 + H(+) = albendazole S-oxide + NADP(+) + H2O. Functionally, essential hepatic enzyme that catalyzes the oxygenation of a wide variety of nitrogen- and sulfur-containing compounds including drugs as well as dietary compounds. Plays an important role in the metabolism of trimethylamine (TMA), via the production of trimethylamine N-oxide (TMAO) metabolite. TMA is generated by the action of gut microbiota using dietary precursors such as choline, choline containing compounds, betaine or L-carnitine. By regulating TMAO concentration, FMO3 directly impacts both platelet responsiveness and rate of thrombus formation. The sequence is that of Flavin-containing monooxygenase 3 (FMO3) from Homo sapiens (Human).